An 86-amino-acid polypeptide reads, in one-letter code: Small ribosomal subunit protein bS20 (86 aa).

Basic residues predominate over residues 1–27 (MANSKSAKKRAIQAEKRRQHNASRRSM). Positions 1-28 (MANSKSAKKRAIQAEKRRQHNASRRSMM) are disordered.

It belongs to the bacterial ribosomal protein bS20 family.

Its function is as follows. Binds directly to 16S ribosomal RNA. In Vibrio parahaemolyticus serotype O3:K6 (strain RIMD 2210633), this protein is Small ribosomal subunit protein bS20.